A 222-amino-acid polypeptide reads, in one-letter code: Probable fimbrial chaperone EcpB (222 aa).

An N-terminal signal peptide occupies residues 1-20 (MKKHLLLLALLLSGISPAQA).

This sequence belongs to the EcpB/EcpE family.

Functionally, part of the ecpRABCDE operon, which encodes the E.coli common pilus (ECP). ECP is found in both commensal and pathogenic strains and plays a dual role in early-stage biofilm development and host cell recognition. This chain is Probable fimbrial chaperone EcpB (ecpB), found in Escherichia coli O157:H7.